We begin with the raw amino-acid sequence, 699 residues long: (E2-independent) E3 ubiquitin-conjugating enzyme FATS (699 aa).

The segment at 48 to 116 is required for interaction with p53/TP53; sequence MISSIVISQM…LGIPAPSDER (69 aa). Disordered stretches follow at residues 107–134, 443–473, and 528–569; these read LGIP…GGPR, KPTR…ERRH, and KSED…PARS. Composition is skewed to basic and acidic residues over residues 113–129 and 460–473; these read SDER…EERP and CLSR…ERRH. Residues 116-224 are required for interaction with HDAC1; that stretch reads RGPEAELPPK…GLCERRKYWV (109 aa). Over residues 534 to 545 the composition is skewed to pro residues; sequence TPEPSPAAPSPA. The tract at residues 571-699 is ALMS motif; that stretch reads TLQEALEVRK…LDQLLQRNAV (129 aa).

As to quaternary structure, interacts with HDAC1; the interaction prevents binding of HDAC1 to CDKN1A/p21 and facilitates the acetylation and stabilization of CDKN1A/p21. Interacts with p53/TP53; the interaction inhibits binding of p53/TP53 and MDM2.

Its subcellular location is the cytoplasm. It is found in the cytoskeleton. The protein localises to the microtubule organizing center. The protein resides in the centrosome. In terms of biological role, tumor suppressor that is required to sustain G2/M checkpoint after DNA damage. Acts as a p53/TP53 activator by inhibiting MDM2 binding to p53/TP53 and stimulating non-proteolytic polyubiquitination of p53/TP53. Exhibits ubiquitin ligase (E3) activity and assemble ubiquitin polymers through 'Lys-11'- (K11-), 'Lys-29'- (K29-) and 'Lys-63'- (K63)-linkages, independently of the ubiquitin-conjugating enzyme (E2). Promotes p53/TP53-dependent transcription of CDKN1A/p21, leading to robust checkpoint response. Mediates CDKN1A/p21 protein stability in a ubiquitin-independent manner. Interacts with HDAC1 and prevents binding of HDAC1 to CDKN1A/p21 and facilitates the acetylation and stabilization of CDKN1A/p21. May have a role in the assembly of primary cilia. The polypeptide is (E2-independent) E3 ubiquitin-conjugating enzyme FATS (Homo sapiens (Human)).